We begin with the raw amino-acid sequence, 719 residues long: Polyphosphate kinase (719 aa).

Asn54 is a binding site for ATP. Residues Arg379 and Arg409 each coordinate Mg(2+). A PLD phosphodiesterase domain is found at Thr434–Thr468. Catalysis depends on His439, which acts as the Phosphohistidine intermediate. The ATP site is built by Tyr472, Arg568, and His596.

The protein belongs to the polyphosphate kinase 1 (PPK1) family. Requires Mg(2+) as cofactor. Post-translationally, an intermediate of this reaction is the autophosphorylated ppk in which a phosphate is covalently linked to a histidine residue through a N-P bond.

The catalysed reaction is [phosphate](n) + ATP = [phosphate](n+1) + ADP. Its function is as follows. Catalyzes the reversible transfer of the terminal phosphate of ATP to form a long-chain polyphosphate (polyP). This chain is Polyphosphate kinase, found in Staphylococcus saprophyticus subsp. saprophyticus (strain ATCC 15305 / DSM 20229 / NCIMB 8711 / NCTC 7292 / S-41).